The sequence spans 1146 residues: Nucleolar protein 6 (1146 aa).

The interval 1 to 48 (MGPAPAGEQLRGATGEPEVMEPALEGTGKEGKKASSRKRTLAEPPAKG) is disordered. Position 56 is a phosphoserine (Ser-56). A coiled-coil region spans residues 83-114 (LLRLQVEELLKEVRLSEKKKDRIDAFLREVNQ). A phosphoserine mark is found at Ser-283, Ser-289, and Ser-811.

It belongs to the NRAP family. In terms of assembly, part of the small subunit (SSU) processome, composed of more than 70 proteins and the RNA chaperone small nucleolar RNA (snoRNA) U3. Interacts with RRP7A; required for NOL6 localization to nucleolus.

The protein localises to the nucleus. It localises to the nucleolus. It is found in the chromosome. Its function is as follows. Part of the small subunit (SSU) processome, first precursor of the small eukaryotic ribosomal subunit. During the assembly of the SSU processome in the nucleolus, many ribosome biogenesis factors, an RNA chaperone and ribosomal proteins associate with the nascent pre-rRNA and work in concert to generate RNA folding, modifications, rearrangements and cleavage as well as targeted degradation of pre-ribosomal RNA by the RNA exosome. The chain is Nucleolar protein 6 from Homo sapiens (Human).